The following is a 343-amino-acid chain: Uroporphyrinogen decarboxylase (343 aa).

Substrate is bound by residues 23-27 (RQAGR), D73, Y149, T204, and H320.

The protein belongs to the uroporphyrinogen decarboxylase family. As to quaternary structure, homodimer.

Its subcellular location is the cytoplasm. It catalyses the reaction uroporphyrinogen III + 4 H(+) = coproporphyrinogen III + 4 CO2. The protein operates within porphyrin-containing compound metabolism; protoporphyrin-IX biosynthesis; coproporphyrinogen-III from 5-aminolevulinate: step 4/4. In terms of biological role, catalyzes the decarboxylation of four acetate groups of uroporphyrinogen-III to yield coproporphyrinogen-III. This chain is Uroporphyrinogen decarboxylase, found in Bradyrhizobium sp. (strain BTAi1 / ATCC BAA-1182).